Here is a 463-residue protein sequence, read N- to C-terminus: uncharacterized protein (463 aa).

This is an uncharacterized protein from Alkalihalophilus pseudofirmus (strain ATCC BAA-2126 / JCM 17055 / OF4) (Bacillus pseudofirmus).